Here is a 383-residue protein sequence, read N- to C-terminus: uncharacterized protein (383 aa).

A helical membrane pass occupies residues 6–26 (LFLFSCLYFIGGNLKALVLGI). The 173-residue stretch at 131–303 (YKKLKNLGFN…LAMVLLNNKY (173 aa)) folds into the ATP-grasp domain.

Its subcellular location is the membrane. This is an uncharacterized protein from Methanocaldococcus jannaschii (strain ATCC 43067 / DSM 2661 / JAL-1 / JCM 10045 / NBRC 100440) (Methanococcus jannaschii).